Reading from the N-terminus, the 485-residue chain is Adenosylhomocysteinase (485 aa).

T60, D146, and E208 together coordinate substrate. Residue 209 to 211 coordinates NAD(+); that stretch reads TTT. Substrate is bound by residues K238 and D242. NAD(+) contacts are provided by residues N243, 272–277, E295, N330, 351–353, and N399; these read GYGDVG and IGH.

The protein belongs to the adenosylhomocysteinase family. The cofactor is NAD(+).

The protein resides in the cytoplasm. It carries out the reaction S-adenosyl-L-homocysteine + H2O = L-homocysteine + adenosine. It participates in amino-acid biosynthesis; L-homocysteine biosynthesis; L-homocysteine from S-adenosyl-L-homocysteine: step 1/1. Its function is as follows. May play a key role in the regulation of the intracellular concentration of adenosylhomocysteine. The polypeptide is Adenosylhomocysteinase (Streptomyces avermitilis (strain ATCC 31267 / DSM 46492 / JCM 5070 / NBRC 14893 / NCIMB 12804 / NRRL 8165 / MA-4680)).